The primary structure comprises 117 residues: Holo-[acyl-carrier-protein] synthase (117 aa).

Mg(2+)-binding residues include aspartate 8 and glutamate 58.

The protein belongs to the P-Pant transferase superfamily. AcpS family. Requires Mg(2+) as cofactor.

It is found in the cytoplasm. The enzyme catalyses apo-[ACP] + CoA = holo-[ACP] + adenosine 3',5'-bisphosphate + H(+). In terms of biological role, transfers the 4'-phosphopantetheine moiety from coenzyme A to a Ser of acyl-carrier-protein. In Shouchella clausii (strain KSM-K16) (Alkalihalobacillus clausii), this protein is Holo-[acyl-carrier-protein] synthase.